The following is a 136-amino-acid chain: Globin-2 (136 aa).

The Globin domain maps to 1 to 134 (VSQADIAAVQ…ILSQMKIALS (134 aa)). His-89 serves as a coordination point for heme b.

It belongs to the globin family. In terms of assembly, homodimer.

In Phreagena soyoae (Deep-sea cold-seep clam), this protein is Globin-2.